Consider the following 306-residue polypeptide: uncharacterized protein (306 aa).

Positions 277–306 (TEIIQNYKIANELKKEKQQNKKKNSIELEE) form a coiled coil.

This is an uncharacterized protein from Saccharolobus islandicus (Sulfolobus islandicus).